An 824-amino-acid chain; its full sequence is Glycerol-3-phosphate acyltransferase (824 aa).

Residues 302 to 307 (CHRSHM) carry the HXXXXD motif motif.

The protein belongs to the GPAT/DAPAT family.

It is found in the cell inner membrane. The enzyme catalyses sn-glycerol 3-phosphate + an acyl-CoA = a 1-acyl-sn-glycero-3-phosphate + CoA. It functions in the pathway phospholipid metabolism; CDP-diacylglycerol biosynthesis; CDP-diacylglycerol from sn-glycerol 3-phosphate: step 1/3. This is Glycerol-3-phosphate acyltransferase from Actinobacillus pleuropneumoniae serotype 3 (strain JL03).